Consider the following 879-residue polypeptide: Alanine--tRNA ligase (879 aa).

4 residues coordinate Zn(2+): histidine 566, histidine 570, cysteine 668, and histidine 672.

Belongs to the class-II aminoacyl-tRNA synthetase family. Zn(2+) is required as a cofactor.

Its subcellular location is the cytoplasm. It catalyses the reaction tRNA(Ala) + L-alanine + ATP = L-alanyl-tRNA(Ala) + AMP + diphosphate. In terms of biological role, catalyzes the attachment of alanine to tRNA(Ala) in a two-step reaction: alanine is first activated by ATP to form Ala-AMP and then transferred to the acceptor end of tRNA(Ala). Also edits incorrectly charged Ser-tRNA(Ala) and Gly-tRNA(Ala) via its editing domain. The sequence is that of Alanine--tRNA ligase from Clostridium botulinum (strain Loch Maree / Type A3).